The chain runs to 101 residues: Small ribosomal subunit protein uS14 (101 aa).

Belongs to the universal ribosomal protein uS14 family. Part of the 30S ribosomal subunit. Contacts proteins S3 and S10.

Its function is as follows. Binds 16S rRNA, required for the assembly of 30S particles and may also be responsible for determining the conformation of the 16S rRNA at the A site. This Orientia tsutsugamushi (strain Ikeda) (Rickettsia tsutsugamushi) protein is Small ribosomal subunit protein uS14.